Reading from the N-terminus, the 270-residue chain is DNA packaging protein OPG160 (270 aa).

25–32 (GGSGSGKT) is a binding site for ATP.

The protein belongs to the orthopoxvirus OPG160 protein family. As to quaternary structure, interacts with protein OPG137.

Its function is as follows. Participates in viral DNA packaging and virion morphogenesis. This is DNA packaging protein OPG160 (OPG160) from Variola virus (isolate Human/India/Ind3/1967) (VARV).